The chain runs to 231 residues: Thrombin-like enzyme leucurobin (231 aa).

Positions 1 to 223 (VIGGDECDIN…YLPWIQSIIA (223 aa)) constitute a Peptidase S1 domain. 6 disulfide bridges follow: Cys-7/Cys-139, Cys-26/Cys-42, Cys-74/Cys-230, Cys-118/Cys-184, Cys-150/Cys-163, and Cys-174/Cys-199. Catalysis depends on charge relay system residues His-41 and Asp-86. Residue Asn-146 is glycosylated (N-linked (GlcNAc...) asparagine). Ser-178 acts as the Charge relay system in catalysis. The N-linked (GlcNAc...) asparagine glycan is linked to Asn-225.

It belongs to the peptidase S1 family. Snake venom subfamily. As to quaternary structure, monomer. In terms of processing, glycosylated. In terms of tissue distribution, expressed by the venom gland.

It is found in the secreted. It catalyses the reaction Selective cleavage of Arg-|-Xaa bond in fibrinogen, to form fibrin, and release fibrinopeptide A. The specificity of further degradation of fibrinogen varies with species origin of the enzyme.. Inhibited by PMSF and benzamidine. Its clotting effect is strongly inhibited by antibothropic serum. Is not inhibited by heparin. In terms of biological role, thrombin-like snake venom serine protease that cleaves Arg-Gly bonds in alpha-chain of fibrinogen (FGA). Induces temporary episodes of opisthotonos and rapid rolling around the long axis of the animal (gyroxin-like effect), when injected into the tail veins of mice (0.143 ug/g mouse). The polypeptide is Thrombin-like enzyme leucurobin (Bothrops leucurus (Whitetail lancehead)).